A 505-amino-acid polypeptide reads, in one-letter code: Amidophosphoribosyltransferase (505 aa).

Catalysis depends on Cys2, which acts as the Nucleophile. One can recognise a Glutamine amidotransferase type-2 domain in the interval 2 to 235 (CGIVGIVSQS…AGEAVYVTFD (234 aa)). 3 residues coordinate Mg(2+): Thr306, Asp368, and Asp369. The interval 484–505 (RNDNAKKKREKQASNLEIYNEQ) is disordered. Positions 496-505 (ASNLEIYNEQ) are enriched in polar residues.

The protein in the C-terminal section; belongs to the purine/pyrimidine phosphoribosyltransferase family. Requires Mg(2+) as cofactor.

The enzyme catalyses 5-phospho-beta-D-ribosylamine + L-glutamate + diphosphate = 5-phospho-alpha-D-ribose 1-diphosphate + L-glutamine + H2O. The protein operates within purine metabolism; IMP biosynthesis via de novo pathway; N(1)-(5-phospho-D-ribosyl)glycinamide from 5-phospho-alpha-D-ribose 1-diphosphate: step 1/2. Catalyzes the formation of phosphoribosylamine from phosphoribosylpyrophosphate (PRPP) and glutamine. The polypeptide is Amidophosphoribosyltransferase (Haemophilus influenzae (strain ATCC 51907 / DSM 11121 / KW20 / Rd)).